The following is a 658-amino-acid chain: Carnitine O-palmitoyltransferase 2, mitochondrial (658 aa).

Residues 1-25 (MMPRLLFRAWPRCPSLVLGAPSRPL) constitute a mitochondrion transit peptide. At 26 to 178 (SAVSGPDDYL…GLLEPEVFHL (153 aa)) the chain is on the mitochondrial matrix side. N6-succinyllysine occurs at positions 69 and 85. The note=Mitochondrial inner membrane intramembrane region spans 179–208 (NPSKSDTDAFKRLIRFVPPSLSWYGAYLVN). The Mitochondrial matrix segment spans residues 209 to 658 (AYPLDMSQYF…DALEGKAIKT (450 aa)). At Lys-239 the chain carries N6-acetyllysine; alternate. Residue Lys-239 is modified to N6-succinyllysine; alternate. Lys-305 carries the N6-acetyllysine modification. Catalysis depends on His-372, which acts as the Proton acceptor. Lys-424 and Lys-439 each carry N6-succinyllysine. Position 452 to 464 (452 to 464 (GKEFLKKKQLSPD)) interacts with CoA. Positions 486, 488, and 499 each coordinate (R)-carnitine. Lys-510 and Lys-544 each carry N6-acetyllysine; alternate. N6-succinyllysine; alternate occurs at positions 510 and 544.

This sequence belongs to the carnitine/choline acetyltransferase family.

The protein localises to the mitochondrion inner membrane. The enzyme catalyses (R)-carnitine + hexadecanoyl-CoA = O-hexadecanoyl-(R)-carnitine + CoA. It carries out the reaction octanoyl-CoA + (R)-carnitine = O-octanoyl-(R)-carnitine + CoA. It catalyses the reaction decanoyl-CoA + (R)-carnitine = O-decanoyl-(R)-carnitine + CoA. The catalysed reaction is dodecanoyl-CoA + (R)-carnitine = O-dodecanoyl-R-carnitine + CoA. The enzyme catalyses tetradecanoyl-CoA + (R)-carnitine = O-tetradecanoyl-(R)-carnitine + CoA. It carries out the reaction (R)-carnitine + octadecanoyl-CoA = O-octadecanoyl-(R)-carnitine + CoA. It catalyses the reaction eicosanoyl-CoA + (R)-carnitine = O-eicosanoyl-(R)-carnitine + CoA. The catalysed reaction is (9Z)-tetradecenoyl-CoA + (R)-carnitine = O-(9Z)-tetradecenoyl-(R)-carnitine + CoA. The enzyme catalyses (5Z)-tetradecenoyl-CoA + (R)-carnitine = O-(5Z)-tetradecenoyl-(R)-carnitine + CoA. It carries out the reaction (R)-carnitine + (9Z)-octadecenoyl-CoA = O-(9Z)-octadecenoyl-(R)-carnitine + CoA. It catalyses the reaction 4,8-dimethylnonanoyl-CoA + (R)-carnitine = O-4,8-dimethylnonanoyl-(R)-carnitine + CoA. Its pathway is lipid metabolism; fatty acid beta-oxidation. Functionally, involved in the intramitochondrial synthesis of acylcarnitines from accumulated acyl-CoA metabolites. Reconverts acylcarnitines back into the respective acyl-CoA esters that can then undergo beta-oxidation, an essential step for the mitochondrial uptake of long-chain fatty acids and their subsequent beta-oxidation in the mitochondrion. Active with medium (C8-C12) and long-chain (C14-C18) acyl-CoA esters. This is Carnitine O-palmitoyltransferase 2, mitochondrial from Rattus norvegicus (Rat).